Consider the following 273-residue polypeptide: 2,3,4,5-tetrahydropyridine-2,6-dicarboxylate N-succinyltransferase (273 aa).

2 residues coordinate substrate: arginine 104 and aspartate 141.

This sequence belongs to the transferase hexapeptide repeat family. Homotrimer.

It is found in the cytoplasm. The catalysed reaction is (S)-2,3,4,5-tetrahydrodipicolinate + succinyl-CoA + H2O = (S)-2-succinylamino-6-oxoheptanedioate + CoA. It functions in the pathway amino-acid biosynthesis; L-lysine biosynthesis via DAP pathway; LL-2,6-diaminopimelate from (S)-tetrahydrodipicolinate (succinylase route): step 1/3. This is 2,3,4,5-tetrahydropyridine-2,6-dicarboxylate N-succinyltransferase from Psychrobacter arcticus (strain DSM 17307 / VKM B-2377 / 273-4).